The following is a 65-amino-acid chain: Large ribosomal subunit protein bL31 (65 aa).

Cysteine 16, cysteine 18, cysteine 36, and cysteine 39 together coordinate Zn(2+).

The protein belongs to the bacterial ribosomal protein bL31 family. Type A subfamily. As to quaternary structure, part of the 50S ribosomal subunit. Requires Zn(2+) as cofactor.

Its function is as follows. Binds the 23S rRNA. This chain is Large ribosomal subunit protein bL31, found in Carboxydothermus hydrogenoformans (strain ATCC BAA-161 / DSM 6008 / Z-2901).